Here is a 297-residue protein sequence, read N- to C-terminus: DNA processing protein DprA (297 aa).

This sequence belongs to the DprA/Smf family. Interacts with RecA. Interacts with ComFA and ComFC.

It localises to the cytoplasm. Functionally, protein that helps load RecA onto ssDNA during transformation. Binds cooperatively to circular ssDNA, is able to bridge different segments of DNA. Favors the loading of RecA onto SsbA- or SsbB-coated ssDNA and formation of RecA-DNA filaments. RecA-ATP cannot catalyze homologous DNA strand exchange; SsbA and DprA activate strand exchange by RecA-ATP. In Bacillus subtilis (strain 168), this protein is DNA processing protein DprA.